Consider the following 167-residue polypeptide: Signal peptidase complex catalytic subunit SEC11 (167 aa).

Residues 1 to 12 (MNLRLELTRFLK) lie on the Cytoplasmic side of the membrane. Residues 13 to 30 (LCFVLSSAFMFWKGLSIA) traverse the membrane as a helical; Signal-anchor for type II membrane protein segment. The Lumenal segment spans residues 31–167 (TNSHSPIVVV…LGISALLSNE (137 aa)). Active-site charge relay system residues include S44, H83, and D109. The segment at 153 to 164 (ALMGFLGISALL) is C-terminal short (CTS) helix.

This sequence belongs to the peptidase S26B family. Component of the signal peptidase complex (SPC) composed of a catalytic subunit SEC11 and three accessory subunits SPC1, SPC2 and SPC3. The complex induces a local thinning of the ER membrane which is used to measure the length of the signal peptide (SP) h-region of protein substrates. This ensures the selectivity of the complex towards h-regions shorter than 18-20 amino acids. SPC associates with the translocon complex.

The protein resides in the endoplasmic reticulum membrane. It carries out the reaction Cleavage of hydrophobic, N-terminal signal or leader sequences from secreted and periplasmic proteins.. Functionally, catalytic component of the signal peptidase complex (SPC) which catalyzes the cleavage of N-terminal signal sequences from nascent proteins as they are translocated into the lumen of the endoplasmic reticulum. Specifically cleaves N-terminal signal peptides that contain a hydrophobic alpha-helix (h-region) shorter than 18-20 amino acids. The polypeptide is Signal peptidase complex catalytic subunit SEC11 (SEC11) (Zygosaccharomyces rouxii (strain ATCC 2623 / CBS 732 / NBRC 1130 / NCYC 568 / NRRL Y-229)).